Reading from the N-terminus, the 52-residue chain is Large ribosomal subunit protein bL32c (52 aa).

It belongs to the bacterial ribosomal protein bL32 family.

It is found in the plastid. It localises to the chloroplast. In Aethionema grandiflorum (Persian stone-cress), this protein is Large ribosomal subunit protein bL32c.